A 118-amino-acid polypeptide reads, in one-letter code: Small ribosomal subunit protein uS13 (118 aa).

The disordered stretch occupies residues 94–118 (GLPLRGQRTRTNARTRKGPRKAIRK).

The protein belongs to the universal ribosomal protein uS13 family. As to quaternary structure, part of the 30S ribosomal subunit. Forms a loose heterodimer with protein S19. Forms two bridges to the 50S subunit in the 70S ribosome.

Its function is as follows. Located at the top of the head of the 30S subunit, it contacts several helices of the 16S rRNA. In the 70S ribosome it contacts the 23S rRNA (bridge B1a) and protein L5 of the 50S subunit (bridge B1b), connecting the 2 subunits; these bridges are implicated in subunit movement. Contacts the tRNAs in the A and P-sites. The polypeptide is Small ribosomal subunit protein uS13 (Stenotrophomonas maltophilia (strain R551-3)).